The primary structure comprises 321 residues: Malate dehydrogenase (321 aa).

NAD(+)-binding positions include 10 to 15 (GAGQIG) and Asp34. Substrate contacts are provided by Arg83 and Arg89. Residues Asn96 and 119–121 (ITN) contribute to the NAD(+) site. Substrate-binding residues include Asn121 and Arg152. Residue His176 is the Proton acceptor of the active site.

This sequence belongs to the LDH/MDH superfamily. MDH type 3 family.

It catalyses the reaction (S)-malate + NAD(+) = oxaloacetate + NADH + H(+). In terms of biological role, catalyzes the reversible oxidation of malate to oxaloacetate. The protein is Malate dehydrogenase of Xanthobacter autotrophicus (strain ATCC BAA-1158 / Py2).